Consider the following 364-residue polypeptide: Aminomethyltransferase (364 aa).

Belongs to the GcvT family. The glycine cleavage system is composed of four proteins: P, T, L and H.

It catalyses the reaction N(6)-[(R)-S(8)-aminomethyldihydrolipoyl]-L-lysyl-[protein] + (6S)-5,6,7,8-tetrahydrofolate = N(6)-[(R)-dihydrolipoyl]-L-lysyl-[protein] + (6R)-5,10-methylene-5,6,7,8-tetrahydrofolate + NH4(+). In terms of biological role, the glycine cleavage system catalyzes the degradation of glycine. The sequence is that of Aminomethyltransferase from Shewanella sp. (strain MR-4).